A 302-amino-acid polypeptide reads, in one-letter code: GATA transcription factor 28 (302 aa).

The segment at Asn47 to Val66 is disordered. One can recognise a Tify domain in the interval Gly77–Gly112. Positions Ala119 to Arg141 are disordered. The segment covering Pro126–Arg141 has biased composition (polar residues). Residues Arg147–Ala189 form the CCT domain. The segment at Gln217–Asn273 adopts a GATA-type zinc-finger fold.

The protein belongs to the type IV zinc-finger family. Class C subfamily. As to expression, predominantly expressed in shoot apices, inflorescences and roots.

It is found in the nucleus. In terms of biological role, transcriptional activator that specifically binds 5'-GATA-3' or 5'-GAT-3' motifs within gene promoters. The chain is GATA transcription factor 28 (GATA28) from Arabidopsis thaliana (Mouse-ear cress).